Reading from the N-terminus, the 177-residue chain is Large ribosomal subunit protein uL6 (177 aa).

This sequence belongs to the universal ribosomal protein uL6 family. As to quaternary structure, part of the 50S ribosomal subunit.

Its function is as follows. This protein binds to the 23S rRNA, and is important in its secondary structure. It is located near the subunit interface in the base of the L7/L12 stalk, and near the tRNA binding site of the peptidyltransferase center. This is Large ribosomal subunit protein uL6 from Rickettsia bellii (strain OSU 85-389).